Reading from the N-terminus, the 1159-residue chain is Reverse gyrase 2 (1159 aa).

The segment at 1–40 adopts an RG N-terminal-type zinc-finger fold; sequence MALELIERGCPNCGGVISSDRLEKGLPCSKCLPKPTEEKV. Zn(2+) contacts are provided by Cys-10, Cys-13, Cys-28, and Cys-31. ATP is bound by residues Gln-82 and 99 to 106; that span reads APTGVGKT. The 190-residue stretch at 86 to 275 folds into the Helicase ATP-binding domain; that stretch reads AKRVFMNQSF…LFRNLLGFDV (190 aa). The DEAD box motif lies at 196-199; the sequence is DDID. The topoisomerase I stretch occupies residues 583–1159; sequence DLFKTTLVIV…LLKEEKAFKK (577 aa). The region spanning 587–743 is the Toprim domain; the sequence is TTLVIVESPN…NIKRAEFHEV (157 aa). Residues Glu-593 and Asp-712 each coordinate Mg(2+). A Topo IA-type catalytic domain is found at 759–1152; sequence DLNLVKAQLV…EVHRIKVLLK (394 aa). The active-site O-(5'-phospho-DNA)-tyrosine intermediate is Tyr-902.

The protein in the N-terminal section; belongs to the DEAD box helicase family. DDVD subfamily. In the C-terminal section; belongs to the type IA topoisomerase family. As to quaternary structure, monomer. Zn(2+) is required as a cofactor. The cofactor is Mg(2+).

Its subcellular location is the cytoplasm. The enzyme catalyses ATP + H2O = ADP + phosphate + H(+). Modifies the topological state of DNA by introducing positive supercoils in an ATP-dependent process, increasing the linking number in steps of +1. Binds to single-stranded DNA, transiently cleaves and then rejoins the ends, introducing a positive supercoil in the process. The scissile phosphodiester is attacked by the catalytic tyrosine of the enzyme, resulting in the formation of a DNA-(5'-phosphotyrosyl)-enzyme intermediate. Probably involved in rewinding DNA strands in regions of the chromosome that have opened up to allow replication, transcription, DNA repair and/or for DNA protection. This is Reverse gyrase 2 from Aquifex aeolicus (strain VF5).